Here is a 337-residue protein sequence, read N- to C-terminus: Glyceraldehyde-3-phosphate dehydrogenase (337 aa).

Residues 12–13, Asp-34, and Lys-79 contribute to the NAD(+) site; that span reads RI. Residues 150–152, Thr-181, 210–211, and Arg-233 contribute to the D-glyceraldehyde 3-phosphate site; these read SCT and TG. Cys-151 acts as the Nucleophile in catalysis. Asn-315 is an NAD(+) binding site.

This sequence belongs to the glyceraldehyde-3-phosphate dehydrogenase family. As to quaternary structure, homotetramer. Expressed in all tissues examined.

Its subcellular location is the cytoplasm. It catalyses the reaction D-glyceraldehyde 3-phosphate + phosphate + NAD(+) = (2R)-3-phospho-glyceroyl phosphate + NADH + H(+). The protein operates within carbohydrate degradation; glycolysis; pyruvate from D-glyceraldehyde 3-phosphate: step 1/5. The protein is Glyceraldehyde-3-phosphate dehydrogenase (gpd) of Lentinula edodes (Shiitake mushroom).